The sequence spans 134 residues: Small ribosomal subunit protein bS6 (134 aa).

Residues 99 to 134 form a disordered region; the sequence is EPSAMMQKRDRDERKDRERGRRRDEDGFSGDRNEEN. The segment covering 105–134 has biased composition (basic and acidic residues); sequence QKRDRDERKDRERGRRRDEDGFSGDRNEEN.

The protein belongs to the bacterial ribosomal protein bS6 family.

Binds together with bS18 to 16S ribosomal RNA. The protein is Small ribosomal subunit protein bS6 of Methylobacterium nodulans (strain LMG 21967 / CNCM I-2342 / ORS 2060).